We begin with the raw amino-acid sequence, 257 residues long: 5-oxoprolinase subunit A (257 aa).

The protein belongs to the LamB/PxpA family. Forms a complex composed of PxpA, PxpB and PxpC.

The catalysed reaction is 5-oxo-L-proline + ATP + 2 H2O = L-glutamate + ADP + phosphate + H(+). In terms of biological role, catalyzes the cleavage of 5-oxoproline to form L-glutamate coupled to the hydrolysis of ATP to ADP and inorganic phosphate. The sequence is that of 5-oxoprolinase subunit A from Bacillus subtilis (strain 168).